The primary structure comprises 512 residues: Maturase K (512 aa).

The protein belongs to the intron maturase 2 family. MatK subfamily.

It localises to the plastid. The protein localises to the chloroplast. Functionally, usually encoded in the trnK tRNA gene intron. Probably assists in splicing its own and other chloroplast group II introns. The polypeptide is Maturase K (Koelreuteria paniculata (Goldenrain tree)).